A 382-amino-acid chain; its full sequence is Lipid-A-disaccharide synthase (382 aa).

The protein belongs to the LpxB family.

It carries out the reaction 2-N,3-O-bis[(3R)-3-hydroxytetradecanoyl]-alpha-D-glucosaminyl 1-phosphate + UDP-2-N,3-O-bis[(3R)-3-hydroxytetradecanoyl]-alpha-D-glucosamine = lipid A disaccharide (E. coli) + UDP + H(+). It catalyses the reaction a lipid X + a UDP-2-N,3-O-bis[(3R)-3-hydroxyacyl]-alpha-D-glucosamine = a lipid A disaccharide + UDP + H(+). It participates in glycolipid biosynthesis; lipid IV(A) biosynthesis; lipid IV(A) from (3R)-3-hydroxytetradecanoyl-[acyl-carrier-protein] and UDP-N-acetyl-alpha-D-glucosamine: step 5/6. Its function is as follows. Condensation of UDP-2,3-diacylglucosamine and 2,3-diacylglucosamine-1-phosphate to form lipid A disaccharide, a precursor of lipid A, a phosphorylated glycolipid that anchors the lipopolysaccharide to the outer membrane of the cell. This is Lipid-A-disaccharide synthase from Serratia proteamaculans (strain 568).